We begin with the raw amino-acid sequence, 196 residues long: uncharacterized protein (196 aa).

Positions 12 to 66 (LRAAREAQKMSQRELSARSGLTQSHISQIERGTMEPGLGSLVDVARALDLEIVLA) constitute an HTH cro/C1-type domain. A DNA-binding region (H-T-H motif) is located at residues 23–42 (QRELSARSGLTQSHISQIER). Residues 174 to 196 (VHRDRDDAVPRSAYALDEEDDNA) form a disordered region.

This is an uncharacterized protein from Sinorhizobium fredii (strain NBRC 101917 / NGR234).